A 196-amino-acid chain; its full sequence is Regulator of G-protein signaling 8 (196 aa).

Ser26 is subject to Phosphoserine. One can recognise an RGS domain in the interval 72 to 188; that stretch reads SFDVLLSHKY…LRSKMYLDLL (117 aa).

Interacts with GNAO1 and GNAI3.

It is found in the cell membrane. It localises to the membrane. The protein localises to the perikaryon. The protein resides in the cell projection. Its subcellular location is the dendrite. It is found in the nucleus. In terms of biological role, regulates G protein-coupled receptor signaling cascades, including signaling via muscarinic acetylcholine receptor CHRM2 and dopamine receptor DRD2. Inhibits signal transduction by increasing the GTPase activity of G protein alpha subunits, thereby driving them into their inactive GDP-bound form. Modulates the activity of potassium channels that are activated in response to DRD2 and CHRM2 signaling. This chain is Regulator of G-protein signaling 8 (RGS8), found in Macaca fascicularis (Crab-eating macaque).